The primary structure comprises 256 residues: tRNA pseudouridine synthase A (256 aa).

The active-site Nucleophile is the Asp-55. Tyr-113 lines the substrate pocket.

It belongs to the tRNA pseudouridine synthase TruA family. In terms of assembly, homodimer.

It catalyses the reaction uridine(38/39/40) in tRNA = pseudouridine(38/39/40) in tRNA. In terms of biological role, formation of pseudouridine at positions 38, 39 and 40 in the anticodon stem and loop of transfer RNAs. This chain is tRNA pseudouridine synthase A, found in Ligilactobacillus salivarius (strain UCC118) (Lactobacillus salivarius).